A 348-amino-acid chain; its full sequence is NADH-ubiquinone oxidoreductase chain 2 (348 aa).

Helical transmembrane passes span 13-33 (VITG…WAGL), 60-80 (FLAQ…NNLL), 96-116 (PLAM…HFWV), 124-144 (PLTS…SIMY), 150-170 (INTH…SWGG), 200-220 (TITT…FLTL), 241-261 (LMPL…LTGF), 278-298 (IIPT…MRLI), and 325-345 (LFIP…PLIL).

Belongs to the complex I subunit 2 family. In terms of assembly, core subunit of respiratory chain NADH dehydrogenase (Complex I) which is composed of 45 different subunits. Interacts with TMEM242.

Its subcellular location is the mitochondrion inner membrane. The catalysed reaction is a ubiquinone + NADH + 5 H(+)(in) = a ubiquinol + NAD(+) + 4 H(+)(out). Core subunit of the mitochondrial membrane respiratory chain NADH dehydrogenase (Complex I) which catalyzes electron transfer from NADH through the respiratory chain, using ubiquinone as an electron acceptor. Essential for the catalytic activity and assembly of complex I. In Papio hamadryas (Hamadryas baboon), this protein is NADH-ubiquinone oxidoreductase chain 2.